The following is a 367-amino-acid chain: Mitogen-activated protein kinase 12 (367 aa).

The 285-residue stretch at Y27–F311 folds into the Protein kinase domain. ATP contacts are provided by residues V33 to V41 and K56. D153 (proton acceptor) is an active-site residue. Position 183 is a phosphothreonine (T183). Positions T183–Y185 match the TXY motif. At Y185 the chain carries Phosphotyrosine.

It belongs to the protein kinase superfamily. CMGC Ser/Thr protein kinase family. MAP kinase subfamily. Monomer. Interacts with the PDZ domain of the syntrophin SNTA1. Interacts with SH3BP5, LIN7C, SCRIB and SYNJ2BP. Interacts with PTPN4; this interaction induces the activation of PTPN4 phosphatase activity. The cofactor is Mg(2+). Dually phosphorylated on Thr-183 and Tyr-185 by MAP2K3/MKK3 and MAP2K6/MKK6, which activates the enzyme. In terms of processing, ubiquitinated. Ubiquitination leads to degradation by the proteasome pathway. In terms of tissue distribution, highly expressed in skeletal muscle. Also expressed in the heart, particularly in cardiac myocytes, lung, thymus and testes.

The protein resides in the cytoplasm. It localises to the nucleus. It is found in the mitochondrion. It carries out the reaction L-seryl-[protein] + ATP = O-phospho-L-seryl-[protein] + ADP + H(+). The catalysed reaction is L-threonyl-[protein] + ATP = O-phospho-L-threonyl-[protein] + ADP + H(+). With respect to regulation, activated by phosphorylation on threonine and tyrosine. MAP2K3/MKK3 and MAP2K6/MKK6 are both essential for the activation of MAPK12 induced by environmental stress, whereas MAP2K6/MKK6 is the major MAPK12 activator in response to TNF-alpha. Serine/threonine kinase which acts as an essential component of the MAP kinase signal transduction pathway. MAPK12 is one of the four p38 MAPKs which play an important role in the cascades of cellular responses evoked by extracellular stimuli such as pro-inflammatory cytokines or physical stress leading to direct activation of transcription factors such as ELK1 and ATF2. Accordingly, p38 MAPKs phosphorylate a broad range of proteins and it has been estimated that they may have approximately 200 to 300 substrates each. Some of the targets are downstream kinases such as MAPKAPK2, which are activated through phosphorylation and further phosphorylate additional targets. Plays a role in myoblast differentiation and also in the down-regulation of cyclin D1 in response to hypoxia in adrenal cells suggesting MAPK12 may inhibit cell proliferation while promoting differentiation. Phosphorylates DLG1. Following osmotic shock, MAPK12 in the cell nucleus increases its association with nuclear DLG1, thereby causing dissociation of DLG1-SFPQ complexes. This function is independent of its catalytic activity and could affect mRNA processing and/or gene transcription to aid cell adaptation to osmolarity changes in the environment. Regulates UV-induced checkpoint signaling and repair of UV-induced DNA damage and G2 arrest after gamma-radiation exposure. MAPK12 is involved in the regulation of SLC2A1 expression and basal glucose uptake in L6 myotubes; and negatively regulates SLC2A4 expression and contraction-mediated glucose uptake in adult skeletal muscle. C-Jun (JUN) phosphorylation is stimulated by MAPK14 and inhibited by MAPK12, leading to a distinct AP-1 regulation. MAPK12 is required for the normal kinetochore localization of PLK1, prevents chromosomal instability and supports mitotic cell viability. MAPK12-signaling is also positively regulating the expansion of transient amplifying myogenic precursor cells during muscle growth and regeneration. In Mus musculus (Mouse), this protein is Mitogen-activated protein kinase 12 (Mapk12).